Reading from the N-terminus, the 190-residue chain is MAVFEGTFTQTEPLRLAVVIGRFNDLVTTKLLAGCQDCLKRHGVDPDPHGNQVDYVWVPGSFEVPLVARQLALTHRYDAIICLGAVIRGQTPHFDYVSAEVSKGIAAASFQTGVPVIFGILTVDTMQQALERAGIKANHGWDYAMNALEMASLMRQLRSNVTDSYSQTQSLPAAFPNASIGKLTAESEEV.

5-amino-6-(D-ribitylamino)uracil-binding positions include Phe-23, 61–63 (SFE), and 85–87 (AVI). 90–91 (QT) serves as a coordination point for (2S)-2-hydroxy-3-oxobutyl phosphate. The Proton donor role is filled by His-93. Residue Phe-118 coordinates 5-amino-6-(D-ribitylamino)uracil. Arg-132 serves as a coordination point for (2S)-2-hydroxy-3-oxobutyl phosphate.

It belongs to the DMRL synthase family.

The catalysed reaction is (2S)-2-hydroxy-3-oxobutyl phosphate + 5-amino-6-(D-ribitylamino)uracil = 6,7-dimethyl-8-(1-D-ribityl)lumazine + phosphate + 2 H2O + H(+). Its pathway is cofactor biosynthesis; riboflavin biosynthesis; riboflavin from 2-hydroxy-3-oxobutyl phosphate and 5-amino-6-(D-ribitylamino)uracil: step 1/2. Catalyzes the formation of 6,7-dimethyl-8-ribityllumazine by condensation of 5-amino-6-(D-ribitylamino)uracil with 3,4-dihydroxy-2-butanone 4-phosphate. This is the penultimate step in the biosynthesis of riboflavin. This chain is 6,7-dimethyl-8-ribityllumazine synthase, found in Nostoc sp. (strain PCC 7120 / SAG 25.82 / UTEX 2576).